Consider the following 323-residue polypeptide: Phospho-N-acetylmuramoyl-pentapeptide-transferase (323 aa).

9 consecutive transmembrane segments (helical) span residues 12 to 32 (IVMA…IIIP), 58 to 78 (PTIG…VMVG), 84 to 104 (AMIA…DDLL), 120 to 140 (MILL…YIGT), 151 to 171 (INLG…VTNA), 177 to 197 (GLDG…GIIS), 200 to 220 (LGHI…LAFL), 229 to 250 (VFMG…ALIL), and 303 to 323 (KIVS…FASL).

This sequence belongs to the glycosyltransferase 4 family. MraY subfamily. The cofactor is Mg(2+).

It localises to the cell membrane. The enzyme catalyses UDP-N-acetyl-alpha-D-muramoyl-L-alanyl-gamma-D-glutamyl-meso-2,6-diaminopimeloyl-D-alanyl-D-alanine + di-trans,octa-cis-undecaprenyl phosphate = di-trans,octa-cis-undecaprenyl diphospho-N-acetyl-alpha-D-muramoyl-L-alanyl-D-glutamyl-meso-2,6-diaminopimeloyl-D-alanyl-D-alanine + UMP. It participates in cell wall biogenesis; peptidoglycan biosynthesis. Catalyzes the initial step of the lipid cycle reactions in the biosynthesis of the cell wall peptidoglycan: transfers peptidoglycan precursor phospho-MurNAc-pentapeptide from UDP-MurNAc-pentapeptide onto the lipid carrier undecaprenyl phosphate, yielding undecaprenyl-pyrophosphoryl-MurNAc-pentapeptide, known as lipid I. The sequence is that of Phospho-N-acetylmuramoyl-pentapeptide-transferase from Clostridium perfringens (strain SM101 / Type A).